Here is a 410-residue protein sequence, read N- to C-terminus: Aspartate aminotransferase (410 aa).

3 residues coordinate L-aspartate: Gly-47, Trp-135, and Asn-185. Residue Lys-249 is modified to N6-(pyridoxal phosphate)lysine. L-aspartate is bound at residue Arg-385.

This sequence belongs to the class-I pyridoxal-phosphate-dependent aminotransferase family. In terms of assembly, homodimer. The cofactor is pyridoxal 5'-phosphate.

The protein localises to the cytoplasm. It carries out the reaction L-aspartate + 2-oxoglutarate = oxaloacetate + L-glutamate. It catalyses the reaction L-2-aminoadipate + 2-oxoglutarate = 2-oxoadipate + L-glutamate. Catalyzes the reversible conversion of aspartate and 2-oxoglutarate to glutamate and oxaloacetate. Genetic evidence shows that this protein is involved in L-lysine catabolism. It may have 2-aminoadipate:2-oxoglutarate aminotransferase activity. This Rhizobium meliloti (strain 1021) (Ensifer meliloti) protein is Aspartate aminotransferase (aatB).